The following is a 339-amino-acid chain: Heat-inducible transcription repressor HrcA (339 aa).

This sequence belongs to the HrcA family.

Its function is as follows. Negative regulator of class I heat shock genes (grpE-dnaK-dnaJ and groELS operons). Prevents heat-shock induction of these operons. This Paraburkholderia phymatum (strain DSM 17167 / CIP 108236 / LMG 21445 / STM815) (Burkholderia phymatum) protein is Heat-inducible transcription repressor HrcA.